The primary structure comprises 167 residues: Peptide deformylase (167 aa).

Fe cation is bound by residues Cys91 and His133. The active site involves Glu134. His137 provides a ligand contact to Fe cation.

It belongs to the polypeptide deformylase family. The cofactor is Fe(2+).

It carries out the reaction N-terminal N-formyl-L-methionyl-[peptide] + H2O = N-terminal L-methionyl-[peptide] + formate. Removes the formyl group from the N-terminal Met of newly synthesized proteins. Requires at least a dipeptide for an efficient rate of reaction. N-terminal L-methionine is a prerequisite for activity but the enzyme has broad specificity at other positions. The sequence is that of Peptide deformylase from Pseudoalteromonas translucida (strain TAC 125).